The sequence spans 260 residues: UPF0758 protein Smed_1459 (260 aa).

The MPN domain maps to 138–260 (VLSSWSAVID…HVSLKGLQLF (123 aa)). Zn(2+)-binding residues include histidine 209, histidine 211, and aspartate 222. The JAMM motif motif lies at 209 to 222 (HNHPSGDPTPSCAD).

Belongs to the UPF0758 family.

This Sinorhizobium medicae (strain WSM419) (Ensifer medicae) protein is UPF0758 protein Smed_1459.